Consider the following 466-residue polypeptide: ATP-dependent protease ATPase subunit HslU (466 aa).

Residues Ile-18, 60–65 (GVGKTE), Asp-279, Glu-344, and Arg-416 each bind ATP.

Belongs to the ClpX chaperone family. HslU subfamily. In terms of assembly, a double ring-shaped homohexamer of HslV is capped on each side by a ring-shaped HslU homohexamer. The assembly of the HslU/HslV complex is dependent on binding of ATP.

The protein localises to the cytoplasm. ATPase subunit of a proteasome-like degradation complex; this subunit has chaperone activity. The binding of ATP and its subsequent hydrolysis by HslU are essential for unfolding of protein substrates subsequently hydrolyzed by HslV. HslU recognizes the N-terminal part of its protein substrates and unfolds these before they are guided to HslV for hydrolysis. The polypeptide is ATP-dependent protease ATPase subunit HslU (Lactobacillus acidophilus (strain ATCC 700396 / NCK56 / N2 / NCFM)).